A 486-amino-acid polypeptide reads, in one-letter code: MTQTTVKNVKNYIGGEWIESRTEKTEDVFNPATGEVIAQVPISTTEDVHHAIEVANEAFKTWKEVPVPKRARILFKYQQLLVEHWEELAKLITLENGKNYAEAYGEVQRGIENVEFATGAPSLMMGEQLASIATELESGVYRYPIGVIGGITPFNFPMMVPCWMFPMAIATGNTFVMKPSERTPLLANRLAELLEEAGLPNGVFNIVHGAHDVVNGLLDHKKVAAISFVGSQPVAEYVYKRGTQNLKRVQALAGAKNHSIVLSDANLENATTQILNAAFGSAGERCMAASVVAVEEDVADEFVTLLTQKANEIKIGNGLDEGVFLGPVIRDQHKERTLQYIESGEEEGANLVRDGRTDEAAKQEGYFVGPTIFDHVTSEMKIWQDEIFAPVLSIARVNNLEEGVDLANESRFANGACIFTRDGGSVRRFRETIDAGMLGVNIGVPAPMAFLPFSGWKDSFYGDLHANGKDGLQFYTRKKVLTTKWV.

NAD(+) contacts are provided by Phe-154, Lys-178, Glu-181, Arg-182, and Ser-231. Cys-286 (nucleophile) is an active-site residue. Residue Glu-386 coordinates NAD(+).

Belongs to the aldehyde dehydrogenase family. IolA subfamily. As to quaternary structure, homotetramer.

The enzyme catalyses 3-oxopropanoate + NAD(+) + CoA + H2O = hydrogencarbonate + acetyl-CoA + NADH + H(+). The catalysed reaction is 2-methyl-3-oxopropanoate + NAD(+) + CoA + H2O = propanoyl-CoA + hydrogencarbonate + NADH + H(+). It functions in the pathway polyol metabolism; myo-inositol degradation into acetyl-CoA; acetyl-CoA from myo-inositol: step 7/7. In terms of biological role, catalyzes the oxidation of malonate semialdehyde (MSA) and methylmalonate semialdehyde (MMSA) into acetyl-CoA and propanoyl-CoA, respectively. Is involved in a myo-inositol catabolic pathway. Bicarbonate, and not CO2, is the end-product of the enzymatic reaction. This is Malonate-semialdehyde dehydrogenase 2 from Oceanobacillus iheyensis (strain DSM 14371 / CIP 107618 / JCM 11309 / KCTC 3954 / HTE831).